A 1081-amino-acid polypeptide reads, in one-letter code: Histone demethylase-like protein A (1081 aa).

Residues Gln37–Tyr173 are disordered. Residues Ser66 to Ser81 are compositionally biased toward low complexity. Residues Asp119–Ser132 show a composition bias toward polar residues. The span at Asn141–Ser161 shows a compositional bias: low complexity. Residues Cys192–Leu287 enclose the SWIRM domain. The segment at Ala902 to Ser940 is disordered. Positions Asn914–His925 are enriched in polar residues. A DNA-binding region (HMG box) is located at residues Ala969 to Lys1049.

Belongs to the flavin monoamine oxidase family.

Its subcellular location is the nucleus. Its function is as follows. H3K4 demethylase-like protein. Might not act as a H3K4 demethylase or is not the major H3K4 demethylase since its deletion does not affect whole genome H3K4 methylation. In Aspergillus fumigatus (strain ATCC MYA-4609 / CBS 101355 / FGSC A1100 / Af293) (Neosartorya fumigata), this protein is Histone demethylase-like protein A.